We begin with the raw amino-acid sequence, 323 residues long: Cyclin-H (323 aa).

Ser-5 is modified (phosphoserine; by CDK8). Ser-132 carries the phosphoserine modification. The interval 297–323 (YEDDDYVSKKSKHEEEEWTDDDLVESL) is disordered. The segment covering 302-311 (YVSKKSKHEE) has biased composition (basic and acidic residues). Ser-304 carries the post-translational modification Phosphoserine; by CDK8. The segment covering 312-323 (EEWTDDDLVESL) has biased composition (acidic residues). Thr-315 carries the phosphothreonine modification. Ser-322 carries the phosphoserine modification.

This sequence belongs to the cyclin family. Cyclin C subfamily. In terms of assembly, associates primarily with CDK7 and MAT1 to form the CAK complex. CAK can further associate with the core-TFIIH to form the TFIIH basal transcription factor.

It localises to the nucleus. In terms of biological role, regulates CDK7, the catalytic subunit of the CDK-activating kinase (CAK) enzymatic complex. CAK activates the cyclin-associated kinases CDK1, CDK2, CDK4 and CDK6 by threonine phosphorylation. CAK complexed to the core-TFIIH basal transcription factor activates RNA polymerase II by serine phosphorylation of the repetitive C-terminal domain (CTD) of its large subunit (POLR2A), allowing its escape from the promoter and elongation of the transcripts. Involved in cell cycle control and in RNA transcription by RNA polymerase II. Its expression and activity are constant throughout the cell cycle. This chain is Cyclin-H (CCNH), found in Homo sapiens (Human).